A 596-amino-acid polypeptide reads, in one-letter code: Chaperonin 60 subunit beta 2, chloroplastic (596 aa).

The transit peptide at 1-50 (MASTFTATSSLGSLLAPNAIKLSSATSISSSSFGRRHNVCVRRSRPAIVC) directs the protein to the chloroplast. Phosphoserine is present on residues S97 and S474. The stretch at 388 to 489 (TQEAVNKRVV…KDTLENDEEK (102 aa)) forms a coiled coil.

Belongs to the chaperonin (HSP60) family. Part of the Cpn60 complex composed of 7 alpha and 7 beta subunits. Can also form a complex composed of 14 beta subunits only. Both complexes show ATPase activity. The Cpn60 complex interacts with the Cpn10 complex. Interacts with RAB during heat stress.

The protein resides in the plastid. It is found in the chloroplast stroma. Its function is as follows. Involved in protein assisted folding. The chain is Chaperonin 60 subunit beta 2, chloroplastic (CPN60B2) from Arabidopsis thaliana (Mouse-ear cress).